We begin with the raw amino-acid sequence, 3644 residues long: Msx2-interacting protein (3644 aa).

A DNA-binding region spans residues 1 to 574 (MVRETRHLWV…DAQAAVKETK (574 aa)). Positions 6–81 (RHLWVGNLPE…RDLRTDYNEP (76 aa)) constitute an RRM 1 domain. The residue at position 99 (serine 99) is a Phosphoserine. Disordered regions lie at residues 103–124 (EVSG…SLHA), 170–209 (YRDP…REQF), and 225–331 (TREV…EKDE). Residue arginine 108 is modified to Omega-N-methylarginine. Phosphoserine occurs at positions 188 and 190. 2 stretches are compositionally biased toward basic and acidic residues: residues 192–207 (NRFD…RARE) and 225–237 (TREV…ERSY). The span at 245–310 (PHSSQSRNQS…TASDDSPARS (66 aa)) shows a compositional bias: low complexity. A Phosphoserine modification is found at serine 310. 3 RRM domains span residues 336–416 (FGIK…VGPE), 439–514 (RTLF…FGKS), and 518–590 (NCVW…FANR). Residues 559–575 (LYSEIEDAQAAVKETKG) are a coiled coil. Disordered stretches follow at residues 625–673 (SKHE…SRRD) and 716–1413 (IREY…ASSF). 2 stretches are compositionally biased toward basic and acidic residues: residues 639–656 (KCRE…ERTY) and 716–745 (IREY…RPIE). Position 647 is a phosphoserine (serine 647). Serine 747, serine 749, serine 758, and serine 762 each carry phosphoserine. Basic and acidic residues predominate over residues 765–783 (HSERLPSDSERRLYRRSSE). A compositionally biased stretch (low complexity) spans 784-794 (RSGSCSSVSPP). A Phosphoserine modification is found at serine 792. Over residues 795–842 (RYDKLEKARLERYTKNEKADKERTFDPERVERERRIVRKEKGEKDKAE) the composition is skewed to basic and acidic residues. The stretch at 822–850 (ERVERERRIVRKEKGEKDKAERQKRKGKA) forms a coiled coil. 3 positions are modified to phosphoserine: serine 852, serine 855, and serine 869. Composition is skewed to basic and acidic residues over residues 863 to 894 (ENDR…KNRL), 904 to 930 (RVKE…RDTT), 947 to 975 (AKSD…EGRT), and 1009 to 1071 (LKIE…KLER). Phosphoserine occurs at positions 1077 and 1183. The span at 1138–1227 (GPEKEEVRKN…ERRSLVHEVG (90 aa)) shows a compositional bias: basic and acidic residues. Positions 1185-1206 (RKQMEQSRRKQRMEMEIAKAEK) form a coiled coil. Phosphoserine is present on residues serine 1209, serine 1237, serine 1267, serine 1276, serine 1283, serine 1293, serine 1298, serine 1302, and serine 1348. Basic and acidic residues predominate over residues 1246–1272 (DHVDFDICTKRERNYRSSRQISEDSER). A compositionally biased stretch (basic and acidic residues) spans 1283–1292 (SFHDDDDPRG). Basic and acidic residues predominate over residues 1351 to 1365 (EPSRWDPPMKQDPSR). Serine 1395 and serine 1397 each carry phosphoserine. Phosphothreonine occurs at positions 1454 and 1456. Disordered regions lie at residues 1494-1538 (DKEK…QERQ) and 1557-2447 (RLQH…ARFK). Residues 1509-1544 (YMKKKKIRTDSEGKLDDKKDERREEEQERQELFASR) are a coiled coil. Composition is skewed to basic and acidic residues over residues 1516 to 1538 (RTDS…QERQ) and 1557 to 1567 (RLQHLERKSEE). The span at 1582-1591 (EGANSTSDSV) shows a compositional bias: polar residues. The span at 1601 to 1646 (RFMELTRMQQKEKEKDQKPKEAEKQEEPETHPKTPEPAAETKEPEP) shows a compositional bias: basic and acidic residues. Residues 1607–1627 (RMQQKEKEKDQKPKEAEKQEE) adopt a coiled-coil conformation. Threonine 1634 bears the Phosphothreonine mark. The segment covering 1701-1710 (VSEPVSVPVE) has biased composition (low complexity). Residues 1756–1765 (PGTTVSQVES) are compositionally biased toward polar residues. Basic and acidic residues predominate over residues 1782–1796 (QRSEEAEEGKVEKPD). Over residues 1797–1810 (TTPSTEPDATQNAG) the composition is skewed to polar residues. Threonine 1844 is subject to Phosphothreonine. Basic and acidic residues-rich tracts occupy residues 1857–1871 (PVTR…EKLK) and 1879–1894 (EAQK…EKIT). 2 positions are modified to phosphoserine: serine 1915 and serine 1936. Residues 1930–1943 (TDHESRSPAKEPVE) are compositionally biased toward basic and acidic residues. Threonine 1965 bears the Phosphothreonine mark. Positions 1967-1976 (RRGRPPKTRR) are enriched in basic residues. Basic and acidic residues-rich tracts occupy residues 1977–1991 (RAEE…EPAE), 2039–2066 (GNPK…DKSG), 2074–2084 (VLERKPPEKTY), and 2097–2106 (GMDRAAHQRS). 2 positions are modified to phosphoserine: serine 2128 and serine 2134. Over residues 2129 to 2147 (PQESESPQKGSGSSPQLAN) the composition is skewed to polar residues. The interaction with MSX2 stretch occupies residues 2138-2462 (GSGSSPQLAN…ESDPVTPPSD (325 aa)). Threonine 2171 carries the phosphothreonine modification. 2 stretches are compositionally biased toward low complexity: residues 2191–2212 (EPSA…ASEE) and 2231–2242 (AAAIGSIISDAS). The region spanning 2216-2704 (EHGHKPAHQA…NVLTGPVNVL (489 aa)) is the RID domain. The span at 2261-2274 (HPREGMEPGLHEAE) shows a compositional bias: basic and acidic residues. The span at 2281–2290 (GTATESSAPQ) shows a compositional bias: polar residues. Residues 2318-2329 (KGSKAEVTPPRK) show a composition bias toward basic and acidic residues. The segment covering 2330–2345 (DKGRQKTTRRRKRNAN) has biased composition (basic residues). A compositionally biased stretch (low complexity) spans 2359 to 2379 (AEQTQSESPAAEEATAATPEA). The residue at position 2366 (serine 2366) is a Phosphoserine. A Phosphothreonine modification is found at threonine 2419. Phosphoserine is present on residues serine 2450 and serine 2454. Disordered stretches follow at residues 2453–2472 (ESDP…TIPL), 2481–2528 (PVIP…MDTS), 2745–2781 (AAKG…GAGL), and 2829–2849 (SQVK…PQTP). Threonine 2458 is modified (phosphothreonine). Serine 2491 is subject to Phosphoserine. The tract at residues 2706-2845 (TPVSATVGTV…ITPTQSAPKG (140 aa)) is interaction with RBPSUH. 2 positions are modified to phosphothreonine: threonine 2913 and threonine 2925. Residues 2974-3023 (NHVPSGPSTPADRTIAHLATPKPDTHSPRPTGPTPGLFPRPCHPSSTTST) form a disordered region. A compositionally biased stretch (pro residues) spans 3003–3015 (PTGPTPGLFPRPC). An asymmetric dimethylarginine mark is found at arginine 3088 and arginine 3096. The segment at 3310-3473 (RTKTSAQVPP…QESSPHGTPQ (164 aa)) is disordered. Residues 3323–3340 (PLQSTQSAQPAPSTQATQ) are compositionally biased toward low complexity. The span at 3366–3379 (QVSQEAKGTQTGGV) shows a compositional bias: polar residues. The residue at position 3413 (serine 3413) is a Phosphoserine. One can recognise an SPOC domain in the interval 3478–3644 (MVQLLKKYPI…PHLMIVIASV (167 aa)).

It belongs to the RRM Spen family. In terms of assembly, interacts with NCOR2, HDAC1, HDAC2, RBBP4, MBD3 and MTA1L1. Interacts with the nuclear receptors RAR and PPARD. Interacts with RAR in absence of ligand. Binds to the steroid receptor RNA coactivator SRA. Interacts with MSX2. Interacts with RBPSUH; this interaction may prevent the interaction between RBPSUH and NOTCH1. Binds to HIPK3. In terms of tissue distribution, highly expressed in testis. Expressed at lower level in brain, lung, spleen, liver and kidney. Weakly expressed in cardiac and skeletal muscles and ovary. In spleen, it is expressed in follicular B-cells, while it is weakly expressed in marginal zone B-cells.

The protein localises to the nucleus. In terms of biological role, may serve as a nuclear matrix platform that organizes and integrates transcriptional responses. In osteoblasts, supports transcription activation: synergizes with RUNX2 to enhance FGFR2-mediated activation of the osteocalcin FGF-responsive element (OCFRE). Has also been shown to be an essential corepressor protein, which probably regulates different key pathways, such as the Notch pathway. Negative regulator of the Notch pathway via its interaction with RBPSUH, which prevents the association between NOTCH1 and RBPSUH, and therefore suppresses the transactivation activity of Notch signaling. Blocks the differentiation of precursor B-cells into marginal zone B-cells. Probably represses transcription via the recruitment of large complexes containing histone deacetylase proteins. May bind both to DNA and RNA. The chain is Msx2-interacting protein (Spen) from Mus musculus (Mouse).